The chain runs to 144 residues: Methylglyoxal synthase (144 aa).

In terms of domain architecture, MGS-like spans 1 to 144; the sequence is MKIALIAHDE…KSGEEKETER (144 aa). Residues histidine 8, lysine 12, 34 to 37, and 54 to 55 each bind substrate; these read TGTT and SG. Catalysis depends on aspartate 60, which acts as the Proton donor/acceptor. Histidine 87 lines the substrate pocket.

This sequence belongs to the methylglyoxal synthase family.

The catalysed reaction is dihydroxyacetone phosphate = methylglyoxal + phosphate. Catalyzes the formation of methylglyoxal from dihydroxyacetone phosphate. The polypeptide is Methylglyoxal synthase (Geobacillus thermodenitrificans (strain NG80-2)).